Here is a 188-residue protein sequence, read N- to C-terminus: Glandular kallikrein-3, submandibular (188 aa).

The Peptidase S1 domain maps to 1–185; the sequence is NYHVLLGQNN…FTSWIKEVMK (185 aa). Residues asparagine 10 and asparagine 36 are each glycosylated (N-linked (GlcNAc...) asparagine). Residue aspartate 47 is the Charge relay system of the active site. 3 cysteine pairs are disulfide-bonded: cysteine 79-cysteine 146, cysteine 111-cysteine 125, and cysteine 136-cysteine 161. The Charge relay system role is filled by serine 140.

Belongs to the peptidase S1 family. Kallikrein subfamily.

The catalysed reaction is Preferential cleavage of Arg-|-Xaa bonds in small molecule substrates. Highly selective action to release kallidin (lysyl-bradykinin) from kininogen involves hydrolysis of Met-|-Xaa or Leu-|-Xaa.. Glandular kallikreins cleave Met-Lys and Arg-Ser bonds in kininogen to release Lys-bradykinin. In Rattus norvegicus (Rat), this protein is Glandular kallikrein-3, submandibular (Klk3).